The primary structure comprises 500 residues: Glycerol kinase (500 aa).

Threonine 13 contacts ADP. ATP-binding residues include threonine 13, threonine 14, and serine 15. Residue threonine 13 participates in sn-glycerol 3-phosphate binding. Position 17 (arginine 17) interacts with ADP. Residues arginine 83, glutamate 84, tyrosine 135, and aspartate 244 each coordinate sn-glycerol 3-phosphate. 5 residues coordinate glycerol: arginine 83, glutamate 84, tyrosine 135, aspartate 244, and glutamine 245. Residues threonine 266 and glycine 309 each contribute to the ADP site. Positions 266, 309, 313, and 410 each coordinate ATP. Glycine 410 and asparagine 414 together coordinate ADP.

This sequence belongs to the FGGY kinase family.

It carries out the reaction glycerol + ATP = sn-glycerol 3-phosphate + ADP + H(+). The protein operates within polyol metabolism; glycerol degradation via glycerol kinase pathway; sn-glycerol 3-phosphate from glycerol: step 1/1. Inhibited by fructose 1,6-bisphosphate (FBP). Its function is as follows. Key enzyme in the regulation of glycerol uptake and metabolism. Catalyzes the phosphorylation of glycerol to yield sn-glycerol 3-phosphate. The protein is Glycerol kinase of Burkholderia vietnamiensis (strain G4 / LMG 22486) (Burkholderia cepacia (strain R1808)).